The chain runs to 502 residues: Protein nucleotidyltransferase YdiU (502 aa).

Residues G98, G100, R101, K121, D133, G134, R184, and R191 each contribute to the ATP site. The Proton acceptor role is filled by D260. 2 residues coordinate Mg(2+): N261 and D270. D270 lines the ATP pocket.

This sequence belongs to the SELO family. It depends on Mg(2+) as a cofactor. Mn(2+) serves as cofactor.

It carries out the reaction L-seryl-[protein] + ATP = 3-O-(5'-adenylyl)-L-seryl-[protein] + diphosphate. The enzyme catalyses L-threonyl-[protein] + ATP = 3-O-(5'-adenylyl)-L-threonyl-[protein] + diphosphate. The catalysed reaction is L-tyrosyl-[protein] + ATP = O-(5'-adenylyl)-L-tyrosyl-[protein] + diphosphate. It catalyses the reaction L-histidyl-[protein] + UTP = N(tele)-(5'-uridylyl)-L-histidyl-[protein] + diphosphate. It carries out the reaction L-seryl-[protein] + UTP = O-(5'-uridylyl)-L-seryl-[protein] + diphosphate. The enzyme catalyses L-tyrosyl-[protein] + UTP = O-(5'-uridylyl)-L-tyrosyl-[protein] + diphosphate. Functionally, nucleotidyltransferase involved in the post-translational modification of proteins. It can catalyze the addition of adenosine monophosphate (AMP) or uridine monophosphate (UMP) to a protein, resulting in modifications known as AMPylation and UMPylation. The chain is Protein nucleotidyltransferase YdiU from Rhizobium rhizogenes (strain K84 / ATCC BAA-868) (Agrobacterium radiobacter).